The primary structure comprises 488 residues: Germacrene A hydroxylase (488 aa).

Topologically, residues 1 to 6 (MELSIT) are cytoplasmic. The chain crosses the membrane as a helical; Signal-anchor for type II membrane protein span at residues 7 to 23 (TSIALATIVFFLYKLAT). At 24 to 488 (RPKSTKKQLP…KTELLLVPSF (465 aa)) the chain is on the lumenal side. N-linked (GlcNAc...) asparagine glycans are attached at residues Asn169, Asn260, and Asn379. Heme is bound at residue Cys432.

It belongs to the cytochrome P450 family. Heme is required as a cofactor.

The protein resides in the endoplasmic reticulum membrane. It catalyses the reaction (+)-(R)-germacrene A + 3 reduced [NADPH--hemoprotein reductase] + 3 O2 = germacra-1(10),4,11(13)-trien-12-oate + 3 oxidized [NADPH--hemoprotein reductase] + 4 H2O + 4 H(+). Its pathway is secondary metabolite biosynthesis; terpenoid biosynthesis. Functionally, involved in the biosynthesis of germacrene-derived sesquiterpene lactones. Catalyzes three consecutive oxidations of germacrene A to produce germacrene A acid. Could also catalyze the three-step oxidation of non-natural substrate amorphadiene to artemisinic acid. The polypeptide is Germacrene A hydroxylase (Lactuca sativa (Garden lettuce)).